We begin with the raw amino-acid sequence, 414 residues long: Enolase (414 aa).

Glutamine 162 contributes to the (2R)-2-phosphoglycerate binding site. Glutamate 204 functions as the Proton donor in the catalytic mechanism. Mg(2+)-binding residues include aspartate 239, glutamate 280, and aspartate 307. (2R)-2-phosphoglycerate is bound by residues lysine 332, arginine 361, serine 362, and lysine 383. Lysine 332 acts as the Proton acceptor in catalysis.

The protein belongs to the enolase family. The cofactor is Mg(2+).

The protein localises to the cytoplasm. Its subcellular location is the secreted. It is found in the cell surface. It carries out the reaction (2R)-2-phosphoglycerate = phosphoenolpyruvate + H2O. The protein operates within carbohydrate degradation; glycolysis; pyruvate from D-glyceraldehyde 3-phosphate: step 4/5. Its function is as follows. Catalyzes the reversible conversion of 2-phosphoglycerate (2-PG) into phosphoenolpyruvate (PEP). It is essential for the degradation of carbohydrates via glycolysis. This chain is Enolase, found in Campylobacter lari (strain RM2100 / D67 / ATCC BAA-1060).